Consider the following 303-residue polypeptide: Taste receptor type 2 member 13 (303 aa).

Residues 1–7 (MESALPS) lie on the Extracellular side of the membrane. Residues 8–28 (ILTLVIIAEFIIGNLSNGFIV) form a helical membrane-spanning segment. Topologically, residues 29–55 (LINYIDWVSKRELSSVDKLLIILAISR) are cytoplasmic. A helical transmembrane segment spans residues 56–76 (IGLIWEILVSWFLALHYLAIF). Residues 77–85 (VSGTGLRIM) are Extracellular-facing. Residues 86-106 (IFSWIVSNHFSLWLATILSIF) traverse the membrane as a helical segment. Over 107-128 (YLLKIASFSSPAFLYLKWRVNK) the chain is Cytoplasmic. Residues 129 to 149 (VILMILLGSLVFLFLNLIQIN) traverse the membrane as a helical segment. Over 150 to 184 (IHIKDWLDRYEGNTTWNFSMSDFVTFSVSVKFTMT) the chain is Extracellular. Residues Asn-162 and Asn-166 are each glycosylated (N-linked (GlcNAc...) asparagine). A helical transmembrane segment spans residues 185-205 (MFSLTPFTVALISFSLLIFSL). The Cytoplasmic portion of the chain corresponds to 206 to 232 (QKHLQKMQLNYKGHREPRTKVHTNALK). The chain crosses the membrane as a helical span at residues 233-253 (IVISFLLLYASFFLCILISWI). The Extracellular portion of the chain corresponds to 254 to 261 (SELYQNTA). The chain crosses the membrane as a helical span at residues 262–282 (IYMLCETIGLFYPSSHSFLLI). Residues 283 to 303 (LGNPKLRQAFLLVAAKVWAKR) are Cytoplasmic-facing.

The protein belongs to the G-protein coupled receptor T2R family.

The protein resides in the membrane. Functionally, receptor that may play a role in the perception of bitterness and is gustducin-linked. May play a role in sensing the chemical composition of the gastrointestinal content. The activity of this receptor may stimulate alpha gustducin, mediate PLC-beta-2 activation and lead to the gating of TRPM5. This Pongo pygmaeus (Bornean orangutan) protein is Taste receptor type 2 member 13 (TAS2R13).